Here is a 325-residue protein sequence, read N- to C-terminus: tRNA dimethylallyltransferase (325 aa).

17 to 24 (GPTASGKT) provides a ligand contact to ATP. Residue 19–24 (TASGKT) participates in substrate binding. Interaction with substrate tRNA stretches follow at residues 42–45 (DSAL), 166–170 (QRIQR), 251–256 (RCVGYR), and 284–291 (KRQITWLR).

It belongs to the IPP transferase family. Monomer. The cofactor is Mg(2+).

It carries out the reaction adenosine(37) in tRNA + dimethylallyl diphosphate = N(6)-dimethylallyladenosine(37) in tRNA + diphosphate. Catalyzes the transfer of a dimethylallyl group onto the adenine at position 37 in tRNAs that read codons beginning with uridine, leading to the formation of N6-(dimethylallyl)adenosine (i(6)A). This chain is tRNA dimethylallyltransferase, found in Burkholderia multivorans (strain ATCC 17616 / 249).